Reading from the N-terminus, the 88-residue chain is Eclosion hormone (88 aa).

Positions 1–26 (MAGKVTVAFFMFAMIAFLANFGYVEC) are cleaved as a signal peptide. 3 disulfides stabilise this stretch: cysteine 40–cysteine 64, cysteine 44–cysteine 60, and cysteine 47–cysteine 75.

It belongs to the insect eclosion hormone family.

The protein localises to the secreted. Functionally, neuropeptide that triggers the performance of ecdysis behaviors at the end of a molt. It triggers adult behavior patterns: larval, pupal and adult ecdysis, and plasticization during the molt. The chain is Eclosion hormone from Manduca sexta (Tobacco hawkmoth).